The primary structure comprises 238 residues: MRPNNRELNQVRPVKITRHYTRYAEGSVLVEFGETKVLCNATVEETVPRFLKGQQQGWVTAEYGMLPRSTHSRMQREAAKGKQGGRTMEIQRLIARSLRAVVDLKALGERTVTVDCDVIQADGGTRTAAITGACVALHDAMSKLVADGVLKENPMKGLVAAISVGIVDGNAVCDLEYVEDSNAETDMNVVMVEDGRLVEVQGTAEGEPFSHMELLQLLDLAHQGINQLLDAQRKALGL.

Residues Arg86 and 124–126 (GTR) contribute to the phosphate site.

This sequence belongs to the RNase PH family. As to quaternary structure, homohexameric ring arranged as a trimer of dimers.

The catalysed reaction is tRNA(n+1) + phosphate = tRNA(n) + a ribonucleoside 5'-diphosphate. Phosphorolytic 3'-5' exoribonuclease that plays an important role in tRNA 3'-end maturation. Removes nucleotide residues following the 3'-CCA terminus of tRNAs; can also add nucleotides to the ends of RNA molecules by using nucleoside diphosphates as substrates, but this may not be physiologically important. Probably plays a role in initiation of 16S rRNA degradation (leading to ribosome degradation) during starvation. This chain is Ribonuclease PH, found in Actinobacillus pleuropneumoniae serotype 7 (strain AP76).